Here is a 291-residue protein sequence, read N- to C-terminus: UDP-N-acetylenolpyruvoylglucosamine reductase (291 aa).

Positions 22–187 constitute an FAD-binding PCMH-type domain; the sequence is RIGGPARYFK…ASATFQLTKD (166 aa). R166 is an active-site residue. C214 serves as the catalytic Proton donor. E283 is a catalytic residue.

The protein belongs to the MurB family. Requires FAD as cofactor.

It is found in the cytoplasm. The catalysed reaction is UDP-N-acetyl-alpha-D-muramate + NADP(+) = UDP-N-acetyl-3-O-(1-carboxyvinyl)-alpha-D-glucosamine + NADPH + H(+). The protein operates within cell wall biogenesis; peptidoglycan biosynthesis. Functionally, cell wall formation. This chain is UDP-N-acetylenolpyruvoylglucosamine reductase, found in Chlamydia trachomatis serovar A (strain ATCC VR-571B / DSM 19440 / HAR-13).